Consider the following 236-residue polypeptide: Spore wall protein 12 (236 aa).

Positions 169-188 (KKSKEPKTPSMVSRENDMER) are disordered.

The protein belongs to the SWP12 family.

The protein resides in the spore wall. The chain is Spore wall protein 12 (SWP12) from Encephalitozoon cuniculi (strain GB-M1) (Microsporidian parasite).